The following is a 346-amino-acid chain: Rhomboid protein 1, mitochondrial (346 aa).

Residues 1-73 (MSGVSSVMLG…RFFSQTSILK (73 aa)) constitute a mitochondrion transit peptide. Transmembrane regions (helical) follow at residues 109-129 (SMTILGLSLMAGIYFGSPYLF), 145-165 (LVYALLGINVAVFGLWQLPKC), 203-223 (MLALWSFGTSLATMLGASNFF), 246-266 (LAIVGPSLGASGALFGVLGCF), 275-295 (ILLFVFPVPGGAWVAFLASVA), and 308-328 (FDYAAHLGGSMMGVLYGWYIS). S256 acts as the Nucleophile in catalysis. Residue H313 is part of the active site.

It belongs to the peptidase S54 family.

The protein localises to the mitochondrion inner membrane. The catalysed reaction is Cleaves type-1 transmembrane domains using a catalytic dyad composed of serine and histidine that are contributed by different transmembrane domains.. Its function is as follows. Mitochondrial rhomboid serine protease processing the mitochondrial membrane fusion regulator MGM1, and the cytochrome c peroxidase (CCP1). Required for TIM11 stability, ATP synthase complex assembly, mitochondrial morphology, cytochrome c (CYC1) storage and mitochondrial genome maintenance. The polypeptide is Rhomboid protein 1, mitochondrial (PCP1) (Saccharomyces cerevisiae (strain ATCC 204508 / S288c) (Baker's yeast)).